Here is a 446-residue protein sequence, read N- to C-terminus: MEFHVRPGGALRGRLRVPGDKSISHRAIMLGALAEGETRISGFLEGADALATLRTFRAMGVDIDGPHQGRVTVQGVGLHGLRAPDGPLDLGNSGTSMRLLCGLLAGQSFDTTLTGDASLSRRPMRRVIDPLTAMGAVIESGQGGTAPLTVRGGQPLHGIDYELPVASAQVKSALLLAGLYARGRTCVTEPAPTRDHTERMLAGFGYPVRQEGRRVCIEGGGRLRGGEIDVPADISSAAFFLVGASIAEGSDITLEHVGMNPTRTGVVDILRLMGADIQVQNEREVGGEPVADLRVRSAPLKGVAIPEALVPLAIDEFPVLFVAAACAEGETLLTGAEELRVKESDRIAVMAEGLTTLGVTAEPQPDGMRIVGQPDWGGGRVHSHGDHRIAMAFTMAATRAREPIEIEDCANVNTSFPGFVELAGDAGVALTRGDAEGRAQQRSDSP.

The 3-phosphoshikimate site is built by Lys21, Ser22, and Arg26. Lys21 serves as a coordination point for phosphoenolpyruvate. Positions 94 and 122 each coordinate phosphoenolpyruvate. 3-phosphoshikimate is bound by residues Ser167, Gln169, Asp315, and Lys342. Gln169 is a phosphoenolpyruvate binding site. Asp315 functions as the Proton acceptor in the catalytic mechanism. Arg346 and Arg388 together coordinate phosphoenolpyruvate.

This sequence belongs to the EPSP synthase family. In terms of assembly, monomer.

Its subcellular location is the cytoplasm. The catalysed reaction is 3-phosphoshikimate + phosphoenolpyruvate = 5-O-(1-carboxyvinyl)-3-phosphoshikimate + phosphate. The protein operates within metabolic intermediate biosynthesis; chorismate biosynthesis; chorismate from D-erythrose 4-phosphate and phosphoenolpyruvate: step 6/7. Its function is as follows. Catalyzes the transfer of the enolpyruvyl moiety of phosphoenolpyruvate (PEP) to the 5-hydroxyl of shikimate-3-phosphate (S3P) to produce enolpyruvyl shikimate-3-phosphate and inorganic phosphate. The polypeptide is 3-phosphoshikimate 1-carboxyvinyltransferase (Alkalilimnicola ehrlichii (strain ATCC BAA-1101 / DSM 17681 / MLHE-1)).